Here is a 306-residue protein sequence, read N- to C-terminus: Glutaminase (306 aa).

Substrate-binding residues include serine 62, asparagine 114, glutamate 159, asparagine 166, tyrosine 190, tyrosine 242, and valine 260.

Belongs to the glutaminase family. In terms of assembly, homotetramer.

The enzyme catalyses L-glutamine + H2O = L-glutamate + NH4(+). This Clostridium tetani (strain Massachusetts / E88) protein is Glutaminase.